The primary structure comprises 62 residues: Bacteriocin pediocin PA-1 (62 aa).

A propeptide spanning residues 1 to 18 (MKKIEKLTEKEMANIIGG) is cleaved from the precursor. 2 disulfides stabilise this stretch: Cys27/Cys32 and Cys42/Cys62. The segment at 40–52 (TTCIINNGAMAWA) is hydrophobic.

The protein belongs to the bacteriocin class IIA/YGNGV family.

Its subcellular location is the secreted. Its function is as follows. Bactericidal activity (effective inhibitor of L.monocytogenes). This is Bacteriocin pediocin PA-1 (pedA) from Pediococcus acidilactici.